The following is a 688-amino-acid chain: MASTPLLVELGAEELPPSAIEPLALALRDGIAKGLADADVAFASAHAYATPRRLAVRVEGLDDKQPDRDIERRGPALAAAFKDGQPTKAAEGFARSCGVTVDDLIHLETDKGTWLGYRYQESGEATTALLPAIVERAVQALPVPKNMRWGASRTEFSRPVHWLVMLYGADVVPATVLGLEAGRTTRGHRFHAPDAIDLAHADDYLDALENAYVLADMQRRRERIREQVLAEAEVNEATAVIDEDLLDEVSGLVEWPVALTGSFDERFLDVPAECLISSMKANQKYFHLLDAQGTLKPLFITVSNIESRDPQQVIEGNEKVIRPRLADAAFFYDTDRKQSLASRRSALESVVFQQSLGTLADKAQRIEAISSFIASRIGGDADHASRAAQLAKCDLVTEMVLEFPELQGIMGTYYARQDGEPEEVAQALHEQYLPRFASDDVPATPAGLALALADRLDTLTGIFGIGQRPSGTKDPFALRRAAIGVLNILVKAELDLDLRELLELAAAQHGDLPKAEGLVDDVLDYMLDRFRAWTQDEGIAVEVYLAVRARPVTRPLDFARRIRAVHAFSQREEAVALAAANKRVSNILSKQQHDGSTSVDTGLLQAEAETTLSTALEQCHQSVRPLLDAARYAEALDVLAQLRGPVDAFFEDVMVMAEDEAVRRNRLALLASLQSLFLEVADIAQLQQ.

It belongs to the class-II aminoacyl-tRNA synthetase family. In terms of assembly, tetramer of two alpha and two beta subunits.

It localises to the cytoplasm. It carries out the reaction tRNA(Gly) + glycine + ATP = glycyl-tRNA(Gly) + AMP + diphosphate. This chain is Glycine--tRNA ligase beta subunit, found in Chromohalobacter salexigens (strain ATCC BAA-138 / DSM 3043 / CIP 106854 / NCIMB 13768 / 1H11).